Here is a 369-residue protein sequence, read N- to C-terminus: Glycerol-3-phosphate dehydrogenase [NAD(P)+] (369 aa).

NADPH contacts are provided by S6, W7, R27, R28, and K101. Sn-glycerol 3-phosphate-binding residues include K101 and G131. Position 135 (A135) interacts with NADPH. Residues K186, D239, S249, R250, and N251 each contribute to the sn-glycerol 3-phosphate site. K186 functions as the Proton acceptor in the catalytic mechanism. Residue R250 coordinates NADPH. E276 lines the NADPH pocket. The disordered stretch occupies residues 312-369 (KDIAPHLTTDDEPQGERTRGERTTDDGQGQGRTSVWGSLKRAFDQLRDGGGSSRRDRP). Basic and acidic residues-rich tracts occupy residues 325–336 (QGERTRGERTTD) and 352–369 (RAFD…RDRP).

It belongs to the NAD-dependent glycerol-3-phosphate dehydrogenase family.

Its subcellular location is the cytoplasm. It catalyses the reaction sn-glycerol 3-phosphate + NAD(+) = dihydroxyacetone phosphate + NADH + H(+). The enzyme catalyses sn-glycerol 3-phosphate + NADP(+) = dihydroxyacetone phosphate + NADPH + H(+). The protein operates within membrane lipid metabolism; glycerophospholipid metabolism. In terms of biological role, catalyzes the reduction of the glycolytic intermediate dihydroxyacetone phosphate (DHAP) to sn-glycerol 3-phosphate (G3P), the key precursor for phospholipid synthesis. The polypeptide is Glycerol-3-phosphate dehydrogenase [NAD(P)+] (Leifsonia xyli subsp. xyli (strain CTCB07)).